The sequence spans 191 residues: Putative endogenous retrovirus group K member 11-1 Env polyprotein (191 aa).

The segment at 1-191 (MPGAIDDHCP…DITLHPQGLV (191 aa)) is truncated surface protein.

Belongs to the beta type-B retroviral envelope protein family. HERV class-II K(HML-8) env subfamily. As to expression, cerebellum and testis.

It is found in the virion. Functionally, retroviral envelope proteins mediate receptor recognition and membrane fusion during early infection. Endogenous envelope proteins may have kept, lost or modified their original function during evolution. The chain is Putative endogenous retrovirus group K member 11-1 Env polyprotein (ERVK11-1) from Homo sapiens (Human).